The chain runs to 355 residues: MTALKNDRFLRALLKQPVDVTPVWMMRQAGRYLPEYRATRAKAGDFMSLCMNPELACEVTLQPLDRYPQLDAAILFSDILTIPDAMGQGLYFETGEGPRFRKVVSSLADIEALPVPDPEQDLGYVMDAVRTIRRELNGRVPLIGFSGSPWTLATYMVEGGSSKDFRKSKAMLYDNPQAMHALLDKLAQSVTSYLNGQIHAGAQAVQIFDSWGGSLSAAAYQEFSLTYMRKIVDGLIREHDGRRVPVILFTKGGGLWLESMAEVGAEALGLDWTCDIGSARARVGERVALQGNMDPSVLYANPAAIRAEVARILAAYGKGTGHVFNLGHGITPEVDPAHAGAFFEAVHELSAQYHG.

Substrate-binding positions include 27–31, D78, Y155, S210, and H328; that span reads RQAGR.

Belongs to the uroporphyrinogen decarboxylase family. As to quaternary structure, homodimer.

The protein localises to the cytoplasm. The enzyme catalyses uroporphyrinogen III + 4 H(+) = coproporphyrinogen III + 4 CO2. The protein operates within porphyrin-containing compound metabolism; protoporphyrin-IX biosynthesis; coproporphyrinogen-III from 5-aminolevulinate: step 4/4. Its function is as follows. Catalyzes the decarboxylation of four acetate groups of uroporphyrinogen-III to yield coproporphyrinogen-III. This Pseudomonas aeruginosa (strain LESB58) protein is Uroporphyrinogen decarboxylase.